The primary structure comprises 174 residues: Large ribosomal subunit protein uL10 (174 aa).

The protein belongs to the universal ribosomal protein uL10 family. In terms of assembly, part of the ribosomal stalk of the 50S ribosomal subunit. The N-terminus interacts with L11 and the large rRNA to form the base of the stalk. The C-terminus forms an elongated spine to which L12 dimers bind in a sequential fashion forming a multimeric L10(L12)X complex.

Its function is as follows. Forms part of the ribosomal stalk, playing a central role in the interaction of the ribosome with GTP-bound translation factors. In Bordetella bronchiseptica (strain ATCC BAA-588 / NCTC 13252 / RB50) (Alcaligenes bronchisepticus), this protein is Large ribosomal subunit protein uL10.